The primary structure comprises 174 residues: Cuticle protein 1 (174 aa).

An N-terminal signal peptide occupies residues 1 to 18 (MRFLIAFVAILGYASASA).

The protein localises to the secreted. The chain is Cuticle protein 1 from Lonomia obliqua (Moth).